Here is a 388-residue protein sequence, read N- to C-terminus: S-adenosylmethionine synthase (388 aa).

His-17 provides a ligand contact to ATP. Mg(2+) is bound at residue Asp-19. Glu-45 provides a ligand contact to K(+). Positions 58 and 106 each coordinate L-methionine. Positions 106 to 116 (QSAHIAQGVDK) are flexible loop. ATP contacts are provided by residues 166-168 (DAK), Asp-241, 247-248 (RK), Ala-264, and Lys-268. Asp-241 serves as a coordination point for L-methionine. Residue Lys-272 participates in L-methionine binding.

It belongs to the AdoMet synthase family. In terms of assembly, homotetramer; dimer of dimers. It depends on Mg(2+) as a cofactor. K(+) is required as a cofactor.

It is found in the cytoplasm. The enzyme catalyses L-methionine + ATP + H2O = S-adenosyl-L-methionine + phosphate + diphosphate. It participates in amino-acid biosynthesis; S-adenosyl-L-methionine biosynthesis; S-adenosyl-L-methionine from L-methionine: step 1/1. In terms of biological role, catalyzes the formation of S-adenosylmethionine (AdoMet) from methionine and ATP. The overall synthetic reaction is composed of two sequential steps, AdoMet formation and the subsequent tripolyphosphate hydrolysis which occurs prior to release of AdoMet from the enzyme. The chain is S-adenosylmethionine synthase from Cereibacter sphaeroides (strain ATCC 17023 / DSM 158 / JCM 6121 / CCUG 31486 / LMG 2827 / NBRC 12203 / NCIMB 8253 / ATH 2.4.1.) (Rhodobacter sphaeroides).